We begin with the raw amino-acid sequence, 267 residues long: Interleukin-1 beta (267 aa).

Positions 1 to 114 are excised as a propeptide; the sequence is MAIVPEPAKE…ETCNDDFVCD (114 aa).

This sequence belongs to the IL-1 family. In terms of assembly, (Microbial infection) Interacts with African swine fever virus (ASFV) protein L83L. As to quaternary structure, monomer. In its precursor form, weakly interacts with full-length MEFV; the mature cytokine does not interact at all. Interacts with integrins ITGAV:ITGBV and ITGA5:ITGB1; integrin-binding is required for IL1B signaling. Interacts with cargo receptor TMED10; the interaction is direct and is required for the secretion of IL1B mature form. Interacts with HSP90AB1; the interaction facilitates cargo translocation into the ERGIC. Interacts with HSP90B1; the interaction facilitates cargo translocation into the ERGIC.

The protein localises to the cytoplasm. It is found in the cytosol. The protein resides in the secreted. It localises to the lysosome. Its subcellular location is the extracellular exosome. Its function is as follows. Potent pro-inflammatory cytokine. Initially discovered as the major endogenous pyrogen, induces prostaglandin synthesis, neutrophil influx and activation, T-cell activation and cytokine production, B-cell activation and antibody production, and fibroblast proliferation and collagen production. Promotes Th17 differentiation of T-cells. Synergizes with IL12/interleukin-12 to induce IFNG synthesis from T-helper 1 (Th1) cells. Plays a role in angiogenesis by inducing VEGF production synergistically with TNF and IL6. Involved in transduction of inflammation downstream of pyroptosis: its mature form is specifically released in the extracellular milieu by passing through the gasdermin-D (GSDMD) pore. The polypeptide is Interleukin-1 beta (IL1B) (Sus scrofa (Pig)).